A 242-amino-acid polypeptide reads, in one-letter code: Uridylate kinase (242 aa).

An ATP-binding site is contributed by 11-14 (KLSG). Residues 19-24 (GNMGYG) form an involved in allosteric activation by GTP region. Glycine 53 is a UMP binding site. Residues glycine 54 and arginine 58 each contribute to the ATP site. Residues aspartate 73 and 134-141 (SGNPFFTT) contribute to the UMP site. ATP is bound by residues threonine 161, tyrosine 167, and aspartate 170.

Belongs to the UMP kinase family. As to quaternary structure, homohexamer.

It is found in the cytoplasm. The enzyme catalyses UMP + ATP = UDP + ADP. It functions in the pathway pyrimidine metabolism; CTP biosynthesis via de novo pathway; UDP from UMP (UMPK route): step 1/1. Its activity is regulated as follows. Allosterically activated by GTP. Inhibited by UTP. Its function is as follows. Catalyzes the reversible phosphorylation of UMP to UDP. This Trichormus variabilis (strain ATCC 29413 / PCC 7937) (Anabaena variabilis) protein is Uridylate kinase.